The chain runs to 209 residues: Ubiquitin-conjugating enzyme E2 S (209 aa).

The UBC core domain maps to 14–160 (QTIRQVMREL…ARMMTEIHAQ (147 aa)). The Glycyl thioester intermediate role is filled by cysteine 98. The segment at 164–209 (CGVGASGDAKDDDGPSTKKHAGLDKKLQDKKKEKLLKEKKRMLKRL) is disordered. A compositionally biased stretch (basic and acidic residues) spans 171-199 (DAKDDDGPSTKKHAGLDKKLQDKKKEKLL). Residues 200–209 (KEKKRMLKRL) show a composition bias toward basic residues.

It belongs to the ubiquitin-conjugating enzyme family.

The enzyme catalyses S-ubiquitinyl-[E1 ubiquitin-activating enzyme]-L-cysteine + [E2 ubiquitin-conjugating enzyme]-L-cysteine = [E1 ubiquitin-activating enzyme]-L-cysteine + S-ubiquitinyl-[E2 ubiquitin-conjugating enzyme]-L-cysteine.. The protein operates within protein modification; protein ubiquitination. In terms of biological role, catalyzes the covalent attachment of ubiquitin to other proteins. Acts as an essential factor of the anaphase promoting complex/cyclosome (APC/C), a cell cycle-regulated ubiquitin ligase that controls progression through mitosis. Acts by specifically elongating polyubiquitin chains initiated by the E2 enzyme vih/UbcH10 on APC/C substrates, enhancing the degradation of APC/C substrates by the proteasome and promoting mitotic exit. This Drosophila yakuba (Fruit fly) protein is Ubiquitin-conjugating enzyme E2 S.